The sequence spans 119 residues: NADH-quinone oxidoreductase subunit A (119 aa).

3 consecutive transmembrane segments (helical) span residues 7–27 (FPVLLFIVVGVGLGLALMTIG), 63–83 (LIAILFILFDLETAFLFPWGV), and 88–108 (IGWPGFFAMGVFLLEFLVGFV).

The protein belongs to the complex I subunit 3 family. NDH-1 is composed of 14 different subunits. Subunits NuoA, H, J, K, L, M, N constitute the membrane sector of the complex.

Its subcellular location is the cell inner membrane. The catalysed reaction is a quinone + NADH + 5 H(+)(in) = a quinol + NAD(+) + 4 H(+)(out). NDH-1 shuttles electrons from NADH, via FMN and iron-sulfur (Fe-S) centers, to quinones in the respiratory chain. The immediate electron acceptor for the enzyme in this species is believed to be ubiquinone. Couples the redox reaction to proton translocation (for every two electrons transferred, four hydrogen ions are translocated across the cytoplasmic membrane), and thus conserves the redox energy in a proton gradient. In Ralstonia pickettii (strain 12J), this protein is NADH-quinone oxidoreductase subunit A.